The chain runs to 835 residues: MKVLALRHSVAQVYADTQIYTHDETKDDYENAFLISNLTTHNILYLNYSVKTLQILNKSGIAAVEIQKMDELFTLIRCNFTYDYIDDIVYLHDYSYYTNNEIRTDQHWVTKTNIEDYLLPGWKLMYVGYNGNDTRGHYNFSFKCQNAATDDDAIIEYIYSNELDFQNFILKKIKERMTTSLPIARLSNRVFRDKLFKTLVSDHSRVVNVGPRNESMFTFLDHPSIKQFSNGPYLVKDTIKLKQERWLGKRLSQFDIGQYKNMLNVLTTLYQYYDMYHEKPIIYMVGSAPSYWIHDVKQYSDLKFETWDPLDTPYSDLHHKELFYASDVTKLKDNSILYVDIRTDRENADWKTWRKIVEEQTANNLNIAYKYLSTGKAKVCCVKMTAMDLELPISAKLLHHPTTEIRSEFYLIMDIWDSKNTKRFIPKGVLYSYINNTITENVFIQQPFKLRTLRNEYVVALYALSNDFNNREDVVKLVNNQKNALITVRINNTFKDEPKVGFKDIYDWTFLPTDFETNESIITSYDGCLGMFGLSISLASKPTGNNHLFILSGTNKYFKLDQFANHMSISRRSHQIRFSESATSYSGYIFRDLSNNNFNLIGTNVENSVSGHVYNALIYYRYNYSFDLKRWIYLHSTNKASIEGGRYYEHAPIELIYACRSAREFAKLQDDLTVLRYSNEIENYINKVYSITYADDPNYFIGIKFKNIPYEYDVKVPHLTFGVLNISDSMVPDVVAILKKFKNELFRMDVTTSYTYMLSDEIYVANVSGVLSTYFKLYNAFYKEQITFGQSRMFIPHITLSFSNKRVVRIGSTRLNIDFIYLRKIKGDTVFDMTE.

Residues 171–245 (KKIKERMTTS…KDTIKLKQER (75 aa)) are N7-methyltransferase activity. Positions 246 to 428 (WLGKRLSQFD…KNTKRFIPKG (183 aa)) are 2'-O-methyltransferase activity. An N7-methyltransferase activity region spans residues 429–555 (VLYSYINNTI…NHLFILSGTN (127 aa)). Residues 556–692 (KYFKLDQFAN…NYINKVYSIT (137 aa)) are GTase/RTPase activity. The 2'-5'-phosphodiesterase activity stretch occupies residues 693–835 (YADDPNYFIG…KGDTVFDMTE (143 aa)). Active-site for 2'-5'-phosphodiesterase activity residues include His-718, Thr-720, His-797, and Thr-799.

This sequence belongs to the rotavirus VP3 family. In terms of assembly, interacts with VP1. Interacts with VP2.

The protein resides in the virion. The enzyme catalyses a 5'-end diphospho-ribonucleoside in mRNA + GTP + H(+) = a 5'-end (5'-triphosphoguanosine)-ribonucleoside in mRNA + diphosphate. It catalyses the reaction a 5'-end (5'-triphosphoguanosine)-ribonucleoside in mRNA + S-adenosyl-L-methionine = a 5'-end (N(7)-methyl 5'-triphosphoguanosine)-ribonucleoside in mRNA + S-adenosyl-L-homocysteine. The catalysed reaction is 5'-triphosphoadenylyl-(2'-&gt;5')-adenylyl-(2'-&gt;5')-adenosine + 2 H2O = 2 AMP + ATP + 2 H(+). Functionally, multifunctional enzyme involved in mRNA capping. Catalyzes the formation of the 5' cap structure on the viral plus-strand transcripts. Specifically binds to GTP and displays guanylyltransferase and methyltransferase activities. Has affinity for ssRNA but not for dsRNA. Capping activity is non-specific and caps RNAs that initiate with either a G or an A residue. Together with VP1 polymerase, forms a VP1-VP3 complex positioned near the channels situated at each of the five-fold vertices of the core. Following infection, the outermost layer of the virus is lost, leaving a double-layered particle (DLP) made up of the core and VP6 shell. VP1 then catalyzes the transcription of fully conservative plus-strand genomic RNAs that are capped by VP3 and extruded through the DLP's channels into the cytoplasm where they function as mRNAs for translation of viral proteins. DLPs probably have an RNA triphosphatase activity as well, whereas open cores do not. In terms of biological role, counteracts the host innate immune response thanks to its phosphodiesterase that degrades the 5'-triphosphorylated, 2'-5' linked adenylate oligomers produced by the host cell IFN-inducible 2',5'-oligoadenylate synthetase (OAS). The host RNaseL is therefore not activated. The chain is Protein VP3 from Bos taurus (Bovine).